We begin with the raw amino-acid sequence, 440 residues long: Probable pectate lyase 10 (440 aa).

The N-terminal stretch at 1-28 (MVIFSRSFLALSTTLIILALCINSSTMA) is a signal peptide. The interval 32-56 (EDLNSHSSSNSSTANKLPNDDGAWN) is disordered. 2 N-linked (GlcNAc...) asparagine glycosylation sites follow: asparagine 41 and asparagine 76. Ca(2+) is bound by residues aspartate 238, aspartate 262, and aspartate 266. Arginine 318 is an active-site residue.

Belongs to the polysaccharide lyase 1 family. Ca(2+) serves as cofactor.

The enzyme catalyses Eliminative cleavage of (1-&gt;4)-alpha-D-galacturonan to give oligosaccharides with 4-deoxy-alpha-D-galact-4-enuronosyl groups at their non-reducing ends.. The protein operates within glycan metabolism; pectin degradation; 2-dehydro-3-deoxy-D-gluconate from pectin: step 2/5. The polypeptide is Probable pectate lyase 10 (Arabidopsis thaliana (Mouse-ear cress)).